Consider the following 168-residue polypeptide: Photosystem I assembly protein Ycf3 (168 aa).

TPR repeat units follow at residues 35-68 (AFAY…EIDP), 72-105 (SYIL…NPFL), and 120-153 (GEQA…TPGN).

Belongs to the Ycf3 family.

Its subcellular location is the plastid. The protein localises to the chloroplast thylakoid membrane. Essential for the assembly of the photosystem I (PSI) complex. May act as a chaperone-like factor to guide the assembly of the PSI subunits. The chain is Photosystem I assembly protein Ycf3 from Morus indica (Mulberry).